Here is a 310-residue protein sequence, read N- to C-terminus: Transcription initiation factor TFIID subunit 8 (310 aa).

The interval 1–30 (MADAAATAGAGGSGTRSGSKQSTNPADNYH) is disordered. Position 2 is an N-acetylalanine (Ala-2). One can recognise a Histone-fold; involved in forming hexamer structure in TFIID complex domain in the interval 35-102 (RTLQVVVSSL…IVVTLVEMGF (68 aa)). Thr-130 bears the Phosphothreonine mark. The disordered stretch occupies residues 262–310 (DSGAEKENTSVLQQNPSLSGSRNGEENIIDNPYLRPVKKPKIRRKKSLS). The segment covering 270-283 (TSVLQQNPSLSGSR) has biased composition (polar residues). Phosphoserine is present on Ser-271. Residues 294–307 (YLRPVKKPKIRRKK) carry the Nuclear localization signal motif. A compositionally biased stretch (basic residues) spans 297 to 310 (PVKKPKIRRKKSLS).

Belongs to the TAF8 family. Component of the TFIID basal transcription factor complex, composed of TATA-box-binding protein TBP, and a number of TBP-associated factors (TAFs), including TAF1, TAF2, TAF3, TAF4, TAF5, TAF6, TAF7, TAF8, TAF9, TAF10, TAF11, TAF12 and TAF13. Interacts with TBP, TAF1, TAF6, TAF10, TAF11 and TAF13. Component also of a small TAF complex (SMAT) containing TAF8, TAF10 and SUPT7L. Forms a heterodimer with TAF10. Interaction with TAF10 is mediated mainly via its histone fold domain while interaction with SUPT7L is via its C-terminal region.

Its subcellular location is the nucleus. It localises to the cytoplasm. In terms of biological role, the TFIID basal transcription factor complex plays a major role in the initiation of RNA polymerase II (Pol II)-dependent transcription. TFIID recognizes and binds promoters with or without a TATA box via its subunit TBP, a TATA-box-binding protein, and promotes assembly of the pre-initiation complex (PIC). The TFIID complex consists of TBP and TBP-associated factors (TAFs), including TAF1, TAF2, TAF3, TAF4, TAF5, TAF6, TAF7, TAF8, TAF9, TAF10, TAF11, TAF12 and TAF13. The TFIID complex structure can be divided into 3 modules TFIID-A, TFIID-B, and TFIID-C. TAF8 is involved in forming the TFIID-B module, together with TAF5. Mediates both basal and activator-dependent transcription. Plays a role in the differentiation of preadipocyte fibroblasts to adipocytes, however, does not seem to play a role in differentiation of myoblasts. Required for the integration of TAF10 in the TAF complex. May be important for survival of cells of the inner cell mass which constitute the pluripotent cell population of the early embryo. In Homo sapiens (Human), this protein is Transcription initiation factor TFIID subunit 8 (TAF8).